The primary structure comprises 337 residues: tRNA N(3)-cytidine methyltransferase METTL2 (337 aa).

S-adenosyl-L-methionine-binding residues include Trp-66, Tyr-70, Gly-140, Asp-165, Asp-191, and Ile-212.

It belongs to the methyltransferase superfamily. METL family. As to quaternary structure, monomer.

The protein localises to the cytoplasm. The catalysed reaction is cytidine(32) in tRNA(Thr) + S-adenosyl-L-methionine = N(3)-methylcytidine(32) in tRNA(Thr) + S-adenosyl-L-homocysteine + H(+). It carries out the reaction cytidine(32) in tRNA(Arg)(CCU) + S-adenosyl-L-methionine = N(3)-methylcytidine(32) in tRNA(Arg)(CCU) + S-adenosyl-L-homocysteine + H(+). Functionally, S-adenosyl-L-methionine-dependent methyltransferase that mediates N(3)-methylcytidine modification of residue 32 of the tRNA anticodon loop of tRNA(Thr)(UGU) and tRNA(Arg)(CCU). N(3)-methylcytidine methylation by mettl2 requires the N6-threonylcarbamoylation of tRNA (t6A37) by the EKC/KEOPS complex as prerequisite. The polypeptide is tRNA N(3)-cytidine methyltransferase METTL2 (mettl2) (Xenopus tropicalis (Western clawed frog)).